The chain runs to 2629 residues: Protein DOP1 homolog (2629 aa).

7 disordered regions span residues 561 to 584, 605 to 652, 688 to 710, 1278 to 1340, 1371 to 1395, 1435 to 1471, and 1766 to 1785; these read NKGV…SRLN, SASN…TPRS, AGNV…PQFY, MDES…SSSA, TYRL…QTEH, ISKT…ATDS, and RQDT…SPTR. 2 stretches are compositionally biased toward polar residues: residues 605–615 and 636–647; these read SASNQSVGRQS and ASDTGQQSSSDL. The segment covering 1307 to 1320 has biased composition (acidic residues); it reads DITDNSDSSDFESD. Over residues 1321–1333 the composition is skewed to basic and acidic residues; it reads SELRETSLEKEDS. Composition is skewed to polar residues over residues 1381-1391 and 1435-1450; these read GENSLNSVATD and ISKT…SCSQ.

The protein belongs to the DOP1 family.

It localises to the golgi apparatus membrane. Its function is as follows. May be involved in protein traffic between late Golgi and early endosomes. The polypeptide is Protein DOP1 homolog (Drosophila pseudoobscura pseudoobscura (Fruit fly)).